The chain runs to 129 residues: Fluoride-specific ion channel FluC (129 aa).

4 helical membrane passes run I8–W28, A34–I54, I70–H90, and A102–I122. Residues G78 and T81 each coordinate Na(+).

This sequence belongs to the fluoride channel Fluc/FEX (TC 1.A.43) family.

The protein resides in the cell inner membrane. It carries out the reaction fluoride(in) = fluoride(out). Na(+) is not transported, but it plays an essential structural role and its presence is essential for fluoride channel function. Fluoride-specific ion channel. Important for reducing fluoride concentration in the cell, thus reducing its toxicity. The polypeptide is Fluoride-specific ion channel FluC (Chlorobium chlorochromatii (strain CaD3)).